The following is a 448-amino-acid chain: Solute carrier family 52, riboflavin transporter, member 1 (448 aa).

5 helical membrane passes run 14–34 (LLVALFGMGSWAAVNGIWVEL), 47–67 (LPSYLSVVVALGNLGLLVVTL), 79–99 (VPIQVVQVLSVVGTALLAPLW), 124–144 (ACCTSNVTFLPFLSHLPPPFL), and 147–167 (FFLGQGLSALLPCVLALVQGV). N-linked (GlcNAc...) asparagine glycosylation occurs at Asn-178. Residues 191–211 (FPASTFFWALTALLVTSAAAF) traverse the membrane as a helical segment. The interval 225 to 267 (TTGGSGPELQLGSPGAEEEEKEEEEALPLQEPPSQAAGTIPGP) is disordered. Residues 240–250 (AEEEEKEEEEA) are compositionally biased toward acidic residues. A run of 5 helical transmembrane segments spans residues 280–300 (AFLLGLMAFTSAVTNGVLPSV), 315–335 (LAVVLGSAANPLACFLAMGVL), 342–362 (LVGLSLLGMLFGAYLMALAIL), 369–389 (VGTTAGVVLVVLSWVLCLCVF), and 407–427 (ALLAAGVAIQVGSLLGAGAMF).

This sequence belongs to the riboflavin transporter family. Widely expressed. Highly expressed in the testis, placenta and small intestine. Expressed at lower level in other tissues.

The protein localises to the cell membrane. The catalysed reaction is riboflavin(in) = riboflavin(out). With respect to regulation, the activity is strongly inhibited by riboflavin analogs, such as lumiflavin. Weakly inhibited by flavin adenine dinucleotide (FAD). Plasma membrane transporter mediating the uptake by cells of the water soluble vitamin B2/riboflavin that plays a key role in biochemical oxidation-reduction reactions of the carbohydrate, lipid, and amino acid metabolism. Humans are unable to synthesize vitamin B2/riboflavin and must obtain it via intestinal absorption. Functionally, (Microbial infection) May function as a cell receptor to retroviral envelopes similar to the porcine endogenous retrovirus (PERV-A). The protein is Solute carrier family 52, riboflavin transporter, member 1 of Homo sapiens (Human).